The following is a 95-amino-acid chain: Transcription and mRNA export factor ENY2-1 (95 aa).

This sequence belongs to the ENY2 family. Component of the nuclear pore complex (NPC)-associated TREX-2 complex (transcription and export complex 2). Component of the SAGA transcription coactivator-HAT complex. Within the SAGA complex, participates in a subcomplex of SAGA called the DUB module (deubiquitination module).

It is found in the nucleus. Its subcellular location is the nucleoplasm. Involved in mRNA export coupled transcription activation by association with both the TREX-2 and the SAGA complexes. The transcription regulatory histone acetylation (HAT) complex SAGA is a multiprotein complex that activates transcription by remodeling chromatin and mediating histone acetylation and deubiquitination. Within the SAGA complex, participates in a subcomplex that specifically deubiquitinates histones. The SAGA complex is recruited to specific gene promoters by activators, where it is required for transcription. The TREX-2 complex functions in docking export-competent ribonucleoprotein particles (mRNPs) to the nuclear entrance of the nuclear pore complex (nuclear basket). TREX-2 participates in mRNA export and accurate chromatin positioning in the nucleus by tethering genes to the nuclear periphery. The polypeptide is Transcription and mRNA export factor ENY2-1 (eny2-1) (Salmo salar (Atlantic salmon)).